Reading from the N-terminus, the 199-residue chain is Zinc finger matrin-type protein 2 (199 aa).

Ala2 carries the post-translational modification N-acetylalanine. Glycyl lysine isopeptide (Lys-Gly) (interchain with G-Cter in SUMO2) cross-links involve residues Lys8, Lys36, Lys39, Lys45, Lys55, Lys61, Lys64, Lys70, Lys102, and Lys123. The interval 27 to 46 (KRLTEEREKKDGKPVQPVKR) is disordered. The Matrin-type zinc-finger motif lies at 80-104 (YYCNVCDCVVKDSINFLDHINGKKH). Residues 150–173 (REEEEKAKAYKKEKQKEKKRRAEE) are compositionally biased toward basic and acidic residues. The disordered stretch occupies residues 150–175 (REEEEKAKAYKKEKQKEKKRRAEEDL).

In terms of assembly, component of the spliceosome B complex.

The protein resides in the nucleus. Involved in pre-mRNA splicing as a component of the spliceosome. This is Zinc finger matrin-type protein 2 (ZMAT2) from Homo sapiens (Human).